The chain runs to 187 residues: Protein GrpE (187 aa).

The segment covering M1 to E17 has biased composition (low complexity). A disordered region spans residues M1–E27.

This sequence belongs to the GrpE family. Homodimer.

The protein localises to the cytoplasm. Its function is as follows. Participates actively in the response to hyperosmotic and heat shock by preventing the aggregation of stress-denatured proteins, in association with DnaK and GrpE. It is the nucleotide exchange factor for DnaK and may function as a thermosensor. Unfolded proteins bind initially to DnaJ; upon interaction with the DnaJ-bound protein, DnaK hydrolyzes its bound ATP, resulting in the formation of a stable complex. GrpE releases ADP from DnaK; ATP binding to DnaK triggers the release of the substrate protein, thus completing the reaction cycle. Several rounds of ATP-dependent interactions between DnaJ, DnaK and GrpE are required for fully efficient folding. This Thioalkalivibrio sulfidiphilus (strain HL-EbGR7) protein is Protein GrpE.